Consider the following 484-residue polypeptide: Coronin-1B (484 aa).

Position 2 is a phosphoserine (Ser-2). 5 WD repeats span residues 80 to 120, 130 to 170, 174 to 213, 217 to 260, and 265 to 305; these read GHTG…LTSP, GHTK…ELYR, LHPD…LVAE, AHEG…EPMA, and DSSN…PYIH. The tract at residues 404 to 446 is disordered; it reads LKVSRRNVLSDSRPASYSRSGASTATAVTDVPSGNLAGAGEAG. Residues 410–430 show a composition bias toward polar residues; the sequence is NVLSDSRPASYSRSGASTATA. Residues 444–482 adopt a coiled-coil conformation; sequence EAGKLEEVMQELRALRMLVKEQGERISRLEEQLGRMENG.

The protein belongs to the WD repeat coronin family. In terms of assembly, forms homooligomers, but does not form complexes with the other coronins. Interacts with Arp2/3 complex components, including ACTR2, ARPC1B and ARPC2. Binds actin. Post-translationally, phosphorylation on Ser-2 regulates the interaction with the Arp2/3 complex and cell motility in fibroblasts. Phosphorylation does not seem to affect subcellular location. Ubiquitous.

It localises to the cytoplasm. Its subcellular location is the cytoskeleton. The protein localises to the stress fiber. In terms of biological role, regulates leading edge dynamics and cell motility in fibroblasts. May be involved in cytokinesis and signal transduction. This chain is Coronin-1B (Coro1b), found in Mus musculus (Mouse).